The chain runs to 1007 residues: MLSALIQNGMSKSGDPTDVENNTTNGSSSTTDNANDVGRGVNTENNSKLENDSSNAATITTSKQDPSAVDEATTPRSINTGASTVPEPDNTRRDSVSSNVSTATTESRRRSKVSRACDQCRKKKIKCDFIEGHDINPDQSCTGCRKIGEKCSFERIPLKRGPSKGYTRSNSQSRERRGSQRRRSSSEVSQKGKKPSVSNPVNAVNESKSEVDASLHPGQSATSTTNVSLHPLLQYLPGMNHSAVSASSPSALQQPFWKVPYHEYQNQRRPSLDSLASDSSQKPGGKTNQQQPLPSQSQPQSLQNIGNSRSNTGPLPTQDTFRNQRYYYQPSQDSVSEAGSDNRRGSSAIPPLLNPAIQLQQQQYSYSQFAIAQQQQQQQQQQQQQQLQLQQHLQQQHQLQQQQSLHSPQANTMNASTGISNGGFVPYSGNKGLPSGGHVLERTDSVASDAMSLNASPNIYTAEVESAPASPVQKKRKRSNRSSTSKKGKSTQQNLPATTPTLINYGQIADAQLIDTYYAYIHLRFPIIPINKDTLTNDLLLVNTQPISELHELNNYILLWFRNSLELLIRICLKDKESEEILYQQSTFVSAINECFQKIVDIHPRFRDLETQIDEKIATIYLVTFIILNCTLALVSYNNSFVLGMSVIIFNELKLWKNFIFGNWNTVTGHDKICLRLYFELNTFDSLQSCSFGVPKLMNLKLDETTASKLFYDEVSNDGTGQETDKWNVDEDPERIRIIVDNMELGYFLSRLCQARRSSFEKPLPLVGEHNENKTIPGLFRAFLSIKRQFTDTLLDLPDAEGKLPEMTPELVTRLSNMICDLTTTIHDLLKLNVEVNPTNCLELFPDNSMQTVDESSAHNSAAQSSDPSNIEVGTVSPYVIAIYKDLFNVVELIKNMPTSLIGCVMGTQAPNFDSQPLVLQLSQCMNNMLQITTFTSSLSPFKIFKHELNAQSKNKTIDAVPLWKQKMKSSLAPLQTAITPQEIMMAQFIDIAWCIADTEELGWFNQ.

Polar residues predominate over residues 1-11 (MLSALIQNGMS). Residues 1 to 115 (MLSALIQNGM…ESRRRSKVSR (115 aa)) form a disordered region. Over residues 21-33 (NNTTNGSSSTTDN) the composition is skewed to low complexity. 3 stretches are compositionally biased toward polar residues: residues 42–65 (NTEN…SKQD), 74–83 (TPRSINTGAS), and 96–105 (VSSNVSTATT). Residues 117 to 151 (CDQCRKKKIKCDFIEGHDINPDQSCTGCRKIGEKC) constitute a DNA-binding region (zn(2)-C6 fungal-type). Disordered regions lie at residues 155-224 (RIPL…ATST), 267-350 (QRRP…SAIP), 399-423 (LQQQ…SNGG), and 462-496 (AEVE…QNLP). Polar residues-rich tracts occupy residues 196–206 (SVSNPVNAVNE) and 274–288 (SLAS…GKTN). Over residues 289–303 (QQQPLPSQSQPQSLQ) the composition is skewed to low complexity. 3 stretches are compositionally biased toward polar residues: residues 304-323 (NIGN…TFRN), 329-339 (QPSQDSVSEAG), and 404-419 (SLHS…STGI). Positions 473-489 (QKKRKRSNRSSTSKKGK) are enriched in basic residues.

The protein belongs to the EDS1/RGT1 family.

The protein resides in the nucleus. The protein localises to the cytoplasm. In terms of biological role, glucose-responsive transcription factor that regulates expression of several glucose transporter (HXT) genes in response to glucose. In the absence of glucose, it functions as a transcriptional repressor, whereas high concentrations of glucose cause it to function as a transcriptional activator. In cells growing on low levels of glucose, has a neutral role, neither repressing nor activating transcription. This Kluyveromyces lactis (strain ATCC 8585 / CBS 2359 / DSM 70799 / NBRC 1267 / NRRL Y-1140 / WM37) (Yeast) protein is Glucose transport transcription regulator RGT1 (RGT1).